A 159-amino-acid chain; its full sequence is Lipoprotein signal peptidase (159 aa).

Helical transmembrane passes span proline 4–threonine 24, methionine 64–lysine 84, and glycine 88–isoleucine 108. Active-site residues include aspartate 118 and aspartate 136. The chain crosses the membrane as a helical span at residues isoleucine 131–leucine 151.

The protein belongs to the peptidase A8 family.

It localises to the cell membrane. The catalysed reaction is Release of signal peptides from bacterial membrane prolipoproteins. Hydrolyzes -Xaa-Yaa-Zaa-|-(S,diacylglyceryl)Cys-, in which Xaa is hydrophobic (preferably Leu), and Yaa (Ala or Ser) and Zaa (Gly or Ala) have small, neutral side chains.. It participates in protein modification; lipoprotein biosynthesis (signal peptide cleavage). Functionally, this protein specifically catalyzes the removal of signal peptides from prolipoproteins. This Staphylococcus carnosus (strain TM300) protein is Lipoprotein signal peptidase.